Reading from the N-terminus, the 465-residue chain is Adenosylhomocysteinase (465 aa).

Substrate-binding residues include threonine 56, aspartate 131, and glutamate 191. 192–194 (TTT) contacts NAD(+). Positions 221 and 225 each coordinate substrate. NAD(+) contacts are provided by residues asparagine 226, 255–260 (GYGNVG), glutamate 278, asparagine 313, 334–336 (IGH), and asparagine 379.

The protein belongs to the adenosylhomocysteinase family. The cofactor is NAD(+).

It localises to the cytoplasm. It catalyses the reaction S-adenosyl-L-homocysteine + H2O = L-homocysteine + adenosine. The protein operates within amino-acid biosynthesis; L-homocysteine biosynthesis; L-homocysteine from S-adenosyl-L-homocysteine: step 1/1. May play a key role in the regulation of the intracellular concentration of adenosylhomocysteine. This is Adenosylhomocysteinase from Bartonella quintana (strain Toulouse) (Rochalimaea quintana).